The primary structure comprises 901 residues: Alpha-actinin-3 (901 aa).

At M1 the chain carries N-acetylmethionine. An actin-binding region spans residues 1 to 261 (MMMVMQPEGL…IMTYVSCFYH (261 aa)). 2 consecutive Calponin-homology (CH) domains span residues 45 to 149 (KQQR…LRFA) and 158 to 264 (TSAK…HAFA). 4 Spectrin repeats span residues 288 to 398 (KLME…WLLS), 408 to 513 (HLAE…ALER), 523 to 634 (RLQL…TLQE), and 644 to 747 (RLRR…EVEN). EF-hand domains lie at 760–795 (EQLN…MGYD) and 796–831 (LGEV…ETAE). Residues D773, N777, M779, D784, D809, and N811 each contribute to the Ca(2+) site.

It belongs to the alpha-actinin family. Homodimer; antiparallel. Also forms heterodimers with ACTN2. Interacts with MYOZ1. As to expression, expression restricted to fast (type 2) skeletal muscle fibers (at protein level).

Functionally, F-actin cross-linking protein which is thought to anchor actin to a variety of intracellular structures. This is a bundling protein. The polypeptide is Alpha-actinin-3 (ACTN3) (Homo sapiens (Human)).